The primary structure comprises 303 residues: MNYRKVICIVGPTGVGKSEIAFHLAKRYDGIIINADSRQLYKGVPIITAQPTFEERSLIPHKLYACLDLHEKISAGRWATLAAEQLDSVCHTKIPLLVGGTGLYLRALFDGIVTIPPISTELSLTMEKQAEEKGISFLYNMLKVHDPLYANSIHPNDRQRVLRALTVFYETGKTFTWWHQQVTEAYPATVLRIGIKIPLIELAPLLEKRIDKMFVQGAIKEVITTYKRYFNKDVQNWSGIGYMELLGAIKGEYTFNEAKERWLKNTRSYAKRQLTWFNADKRIIWFCPDQLEDIQKCVENWLS.

11-18 contacts ATP; sequence GPTGVGKS. Residue 13-18 coordinates substrate; sequence TGVGKS. Interaction with substrate tRNA regions lie at residues 36–39 and 159–163; these read DSRQ and QRVLR.

Belongs to the IPP transferase family. As to quaternary structure, monomer. It depends on Mg(2+) as a cofactor.

The enzyme catalyses adenosine(37) in tRNA + dimethylallyl diphosphate = N(6)-dimethylallyladenosine(37) in tRNA + diphosphate. Catalyzes the transfer of a dimethylallyl group onto the adenine at position 37 in tRNAs that read codons beginning with uridine, leading to the formation of N6-(dimethylallyl)adenosine (i(6)A). This is tRNA dimethylallyltransferase from Lawsonia intracellularis (strain PHE/MN1-00).